The primary structure comprises 181 residues: Inner membrane-spanning protein YciB (181 aa).

Transmembrane regions (helical) follow at residues L10–I30, M50–D70, A72–S92, V118–F138, and F148–L168.

Belongs to the YciB family.

Its subcellular location is the cell inner membrane. Its function is as follows. Plays a role in cell envelope biogenesis, maintenance of cell envelope integrity and membrane homeostasis. This is Inner membrane-spanning protein YciB from Shewanella oneidensis (strain ATCC 700550 / JCM 31522 / CIP 106686 / LMG 19005 / NCIMB 14063 / MR-1).